The following is a 563-amino-acid chain: Endogenous retroviral envelope protein HEMO (563 aa).

The N-terminal stretch at 1-26 is a signal peptide; it reads MGSLSNYALLQLTLTAFLTILVQPQH. At 27-488 the chain is on the extracellular side; that stretch reads LLAPVFRTLS…IFAKVGDWFR (462 aa). N122 and N192 each carry an N-linked (GlcNAc...) asparagine glycan. Residues 489–509 form a helical membrane-spanning segment; the sequence is SWGYVLLIVLFCLFIFVLIYV. The Cytoplasmic segment spans residues 510 to 563; that stretch reads RVFRKSRRSLNSQPLNLALSPQQSAQLLVSETSCQVSNRAMKGLTTHQYDTSLL.

It belongs to the gamma type-C retroviral envelope protein family. Post-translationally, N-glycosylated. Cleaved by some metalloproteinase at 432-Gln-Arg-433 (mainly) or 433-Arg-Gln-434, leading to release the secreted form (Endogenous retroviral envelope protein HEMO, secreted form) in the extracellular medium. As to expression, expressed at high level in the placenta and stem cells (at protein level). Also expressed in the kidney but at a lower level. Endogenous retroviral envelope protein HEMO, secreted form: Present in the blood of pregnant women (at protein level).

It localises to the cell membrane. It is found in the secreted. Endogenous envelope proteins originate from retroviral envelope proteins, which mediate receptor recognition and membrane fusion during early infection. Endogenous envelope proteins may have kept, lost or modified their original function during evolution. This is Endogenous retroviral envelope protein HEMO from Homo sapiens (Human).